Reading from the N-terminus, the 173-residue chain is Nucleoside-triphosphatase THEP1 (173 aa).

ATP-binding positions include 15 to 22 (GMPGVGKT) and 101 to 108 (LKIIDEIG).

Belongs to the THEP1 NTPase family.

It carries out the reaction a ribonucleoside 5'-triphosphate + H2O = a ribonucleoside 5'-diphosphate + phosphate + H(+). Has nucleotide phosphatase activity towards ATP, GTP, CTP, TTP and UTP. May hydrolyze nucleoside diphosphates with lower efficiency. This is Nucleoside-triphosphatase THEP1 from Pyrobaculum aerophilum (strain ATCC 51768 / DSM 7523 / JCM 9630 / CIP 104966 / NBRC 100827 / IM2).